Here is a 261-residue protein sequence, read N- to C-terminus: UPF0328 protein ECU03_1620 (261 aa).

Belongs to the UPF0328 family.

In Encephalitozoon cuniculi (strain GB-M1) (Microsporidian parasite), this protein is UPF0328 protein ECU03_1620.